Reading from the N-terminus, the 76-residue chain is Large ribosomal subunit protein uL24 (76 aa).

The protein belongs to the universal ribosomal protein uL24 family. As to quaternary structure, part of the 50S ribosomal subunit.

Its function is as follows. One of two assembly initiator proteins, it binds directly to the 5'-end of the 23S rRNA, where it nucleates assembly of the 50S subunit. In terms of biological role, one of the proteins that surrounds the polypeptide exit tunnel on the outside of the subunit. The polypeptide is Large ribosomal subunit protein uL24 (Sulfurimonas denitrificans (strain ATCC 33889 / DSM 1251) (Thiomicrospira denitrificans (strain ATCC 33889 / DSM 1251))).